The primary structure comprises 123 residues: Small ribosomal subunit protein uS12 (123 aa).

A 3-methylthioaspartic acid modification is found at Asp89.

This sequence belongs to the universal ribosomal protein uS12 family. As to quaternary structure, part of the 30S ribosomal subunit. Contacts proteins S8 and S17. May interact with IF1 in the 30S initiation complex.

In terms of biological role, with S4 and S5 plays an important role in translational accuracy. Interacts with and stabilizes bases of the 16S rRNA that are involved in tRNA selection in the A site and with the mRNA backbone. Located at the interface of the 30S and 50S subunits, it traverses the body of the 30S subunit contacting proteins on the other side and probably holding the rRNA structure together. The combined cluster of proteins S8, S12 and S17 appears to hold together the shoulder and platform of the 30S subunit. In Nitrobacter hamburgensis (strain DSM 10229 / NCIMB 13809 / X14), this protein is Small ribosomal subunit protein uS12.